The chain runs to 235 residues: Protein fmp52-1, mitochondrial (235 aa).

The transit peptide at 1–36 (MANTALIGCTGMVGSFILNNLLAHPSVARVDTISRR) directs the protein to the mitochondrion.

Belongs to the FMP52 family.

It localises to the mitochondrion outer membrane. The protein is Protein fmp52-1, mitochondrial (fmp521) of Aspergillus oryzae (strain ATCC 42149 / RIB 40) (Yellow koji mold).